Reading from the N-terminus, the 332-residue chain is Probable class II chitinase ARB_00204 (332 aa).

A signal peptide spans 1 to 18 (MKTPFTILAALTVATTLA). The region spanning 19–331 (DVPDEWDIIE…NPHRKYLDSF (313 aa)) is the GH18 domain. Glu118 acts as the Proton donor in catalysis. A glycan (N-linked (GlcNAc...) asparagine) is linked at Asn245.

This sequence belongs to the glycosyl hydrolase 18 family. Chitinase class II subfamily.

It is found in the secreted. The catalysed reaction is Random endo-hydrolysis of N-acetyl-beta-D-glucosaminide (1-&gt;4)-beta-linkages in chitin and chitodextrins.. Degrades chitin and chitotriose. The protein is Probable class II chitinase ARB_00204 of Arthroderma benhamiae (strain ATCC MYA-4681 / CBS 112371) (Trichophyton mentagrophytes).